A 204-amino-acid chain; its full sequence is Photosystem I reaction center subunit II-2, chloroplastic (204 aa).

A chloroplast-targeting transit peptide spans 1-44; it reads MATQAAGIFSPAITTTTSAVKKLHLFSSSHRPKSLSFTKTAIRA. Threonine 47 carries the post-translational modification Phosphothreonine. Positions 47–71 are disordered; that stretch reads TESSSAAPAVKEAPVGFTPPQLDPN. The segment at 137–145 is ferredoxin and ferredoxin-oxidoreductase binding; it reads RLRSKYKIT.

It belongs to the PsaD family. In terms of assembly, interacts with CURT1C.

Its subcellular location is the plastid. It localises to the chloroplast thylakoid membrane. In terms of biological role, PSAD can form complexes with ferredoxin and ferredoxin-oxidoreductase in photosystem I (PS I) reaction center. PSAD may encode the ferredoxin-docking protein. The sequence is that of Photosystem I reaction center subunit II-2, chloroplastic (PSAD2) from Arabidopsis thaliana (Mouse-ear cress).